The primary structure comprises 1390 residues: Contactin (1390 aa).

The N-terminal stretch at 1–18 (MLAKIGLLASILVLNLVG) is a signal peptide. A disordered region spans residues 25–67 (SENLPDPDPQSGQQPQNYQPSYNKDYSPRYNPLYTGQQSADPN). Over residues 58 to 67 (YTGQQSADPN) the composition is skewed to polar residues. Ig-like C2-type domains are found at residues 362-463 (PYFV…AHLN), 468-561 (MEFN…LRVT), 576-656 (PKVF…IYIN), 661-745 (PQFT…TSFS), 756-843 (PSFK…ARVI), and 848-939 (IRFI…TSVS). Asn369 is a glycosylation site (N-linked (GlcNAc...) asparagine). 4 disulfide bridges follow: Cys388–Cys446, Cys489–Cys540, Cys593–Cys640, and Cys682–Cys734. N-linked (GlcNAc...) asparagine glycosylation is found at Asn537, Asn604, Asn629, Asn691, and Asn774. Disulfide bonds link Cys779–Cys827 and Cys870–Cys923. 3 N-linked (GlcNAc...) asparagine glycosylation sites follow: Asn912, Asn986, and Asn991. Fibronectin type-III domains lie at 946 to 1048 (APGG…TYED), 1053 to 1151 (APRN…SAED), 1156 to 1254 (APQK…TYRK), and 1259 to 1357 (PPSS…MGKT). Asn1166, Asn1171, and Asn1307 each carry an N-linked (GlcNAc...) asparagine glycan. Ala1362 carries the GPI-anchor amidated alanine lipid modification. Positions 1363–1390 (NTRHGHNINTALILSTLLLISTFLYTSQ) are cleaved as a propeptide — removed in mature form.

It belongs to the immunoglobulin superfamily. Contactin family. As to quaternary structure, forms a complex with Nrg and Nrx. Forms a complex composed of septa junction proteins Nrx-IV/Nrx, Tsf2/MTf, Cont and Nrg during late embryogenesis. N-glycosylated. Expressed in ectodermally derived epithelial cells from stage 12. All these tissues, such as epidermis, hindgut, foregut, salivary glands and trachea, which contain pleated septate junctions. Expressed by ectodermally derived epithelial cells and along peripheral nerves. Not present in midline glial cells. Expressed in epithelial cells and glial cells of peripheral nerves.

The protein localises to the cell membrane. It is found in the cell junction. It localises to the septate junction. Required for organization of septate junctions and paracellular barrier functions. Septate junctions, which are the equivalent of vertebrates tight junctions, are characterized by regular arrays of transverse structures that span the intermembrane space and form a physical barrier to diffusion. The chain is Contactin (Cont) from Drosophila melanogaster (Fruit fly).